Here is an 831-residue protein sequence, read N- to C-terminus: uncharacterized protein (831 aa).

A disordered region spans residues 285 to 311; it reads ALNLKRQQLKEEQKEQQSTGDRSDVST. 470–477 is an ATP binding site; it reads GDTGNGKS.

This is an uncharacterized protein from Bacillus subtilis (strain 168).